The chain runs to 904 residues: Auxilin-related protein 1 (904 aa).

Disordered stretches follow at residues 46 to 99 (AAGK…FDYD), 150 to 731 (SSIS…NLRK), and 749 to 776 (SASQ…RHQR). A compositionally biased stretch (basic and acidic residues) spans 59 to 69 (DPGRDGDDLLF). The span at 81 to 95 (YGSSSGDSRSPSAPA) shows a compositional bias: low complexity. A compositionally biased stretch (basic and acidic residues) spans 178 to 188 (KGADSDREEKG). The segment covering 201–215 (RTSSPPSKRTTSETT) has biased composition (low complexity). Acidic residues predominate over residues 232-244 (VEEDPFVVLEESE). A compositionally biased stretch (basic and acidic residues) spans 245-271 (STPREPSRTDPLDDIGKFNSRKTDHSS). Positions 370–383 (SAPPPTRPPPPRPT) are enriched in pro residues. The span at 394–419 (SIPTSAYHSHVPSSGRASVNSPTASQ) shows a compositional bias: polar residues. Residues 456–663 (SAAAMKDAMD…AAAEARGRAA (208 aa)) adopt a coiled-coil conformation. 2 stretches are compositionally biased toward basic and acidic residues: residues 462-570 (DAMD…EAHA) and 581-660 (TDAR…EARG). The region spanning 619-640 (REKAEKAAAEAKERANAEAREK) is the R domain. Residues 661-673 (RAAAQAKAKQQQE) are compositionally biased toward low complexity. Polar residues predominate over residues 674–697 (NTNDLDSFFSSISRPNSAPRQRTN). Residues 762–804 (ETEERRRARLERHQRTQERAAKALAEKNERDLQVQREQVEKDR) adopt a coiled-coil conformation. Residues 764–776 (EERRRARLERHQR) are compositionally biased toward basic and acidic residues. One can recognise a J domain in the interval 839–904 (CGWQPVSLTD…WNKFNSEELF (66 aa)).

In terms of assembly, interacts with SH3P1.

Its subcellular location is the cell membrane. The protein resides in the golgi apparatus. It is found in the trans-Golgi network. The protein localises to the endoplasmic reticulum. It localises to the cytoplasmic vesicle. In terms of biological role, promotes uncoating of clathrin-coated vesicles. May interact directly with clathrin. The protein is Auxilin-related protein 1 of Arabidopsis thaliana (Mouse-ear cress).